The primary structure comprises 208 residues: Protein-L-isoaspartate O-methyltransferase (208 aa).

Serine 59 is an active-site residue.

It belongs to the methyltransferase superfamily. L-isoaspartyl/D-aspartyl protein methyltransferase family.

The protein localises to the cytoplasm. It catalyses the reaction [protein]-L-isoaspartate + S-adenosyl-L-methionine = [protein]-L-isoaspartate alpha-methyl ester + S-adenosyl-L-homocysteine. Functionally, catalyzes the methyl esterification of L-isoaspartyl residues in peptides and proteins that result from spontaneous decomposition of normal L-aspartyl and L-asparaginyl residues. It plays a role in the repair and/or degradation of damaged proteins. This Pectobacterium atrosepticum (strain SCRI 1043 / ATCC BAA-672) (Erwinia carotovora subsp. atroseptica) protein is Protein-L-isoaspartate O-methyltransferase.